The following is a 285-amino-acid chain: Ribosomal RNA small subunit methyltransferase H (285 aa).

Residues 34–36 (AGH), Asp-51, Phe-75, Asp-96, and His-103 contribute to the S-adenosyl-L-methionine site. The disordered stretch occupies residues 258 to 285 (PLVPSEKEAAQNPRARSAKLRAAEKEAP).

This sequence belongs to the methyltransferase superfamily. RsmH family.

The protein resides in the cytoplasm. The catalysed reaction is cytidine(1402) in 16S rRNA + S-adenosyl-L-methionine = N(4)-methylcytidine(1402) in 16S rRNA + S-adenosyl-L-homocysteine + H(+). Functionally, specifically methylates the N4 position of cytidine in position 1402 (C1402) of 16S rRNA. This chain is Ribosomal RNA small subunit methyltransferase H, found in Thermus thermophilus (strain ATCC BAA-163 / DSM 7039 / HB27).